Reading from the N-terminus, the 361-residue chain is MSVPFDPASYDRQLEEKTVRLRELLAPFDAPEPQVFDSPREHYRLRAEFRLWREDQKRYYAMFAPGDNRTPILLEGLPIASERINALMPVLRERWEASPTLNHKLFQVDFLTTLAGDAMITMCYHRPLDAEWQAAAEQLAAELNVSLIGRSKGQKLIIGQDYVTEKLDVAGRTFSYRQPEGAFTQPNGTVNGKMLNWAFDALGERQDDLLELYCGNGNFTLPLATRVRKVLATEISKTSVNAALSNLDDNGVDNVTLVRLSAEELTEALNEVRPFRRLHGVDLKSYDFGSVFVDPPRAGMDPDTCELTRRFERILYISCNPETLAANIAQLHDTHRVERCALFDQFPYTHHMESGVLLVRR.

Residues Gln-185, Tyr-213, Asn-218, Glu-234, and Asp-294 each coordinate S-adenosyl-L-methionine. The active-site Nucleophile is the Cys-319. Residue Glu-353 is the Proton acceptor of the active site.

This sequence belongs to the class I-like SAM-binding methyltransferase superfamily. RNA M5U methyltransferase family. TrmA subfamily.

The catalysed reaction is uridine(54) in tRNA + S-adenosyl-L-methionine = 5-methyluridine(54) in tRNA + S-adenosyl-L-homocysteine + H(+). It carries out the reaction uridine(341) in tmRNA + S-adenosyl-L-methionine = 5-methyluridine(341) in tmRNA + S-adenosyl-L-homocysteine + H(+). Its function is as follows. Dual-specificity methyltransferase that catalyzes the formation of 5-methyluridine at position 54 (m5U54) in all tRNAs, and that of position 341 (m5U341) in tmRNA (transfer-mRNA). The protein is tRNA/tmRNA (uracil-C(5))-methyltransferase of Pseudomonas savastanoi pv. phaseolicola (strain 1448A / Race 6) (Pseudomonas syringae pv. phaseolicola (strain 1448A / Race 6)).